We begin with the raw amino-acid sequence, 590 residues long: V-type ATP synthase alpha chain (590 aa).

232-239 (GPFGSGKT) contacts ATP.

This sequence belongs to the ATPase alpha/beta chains family.

The enzyme catalyses ATP + H2O + 4 H(+)(in) = ADP + phosphate + 5 H(+)(out). Functionally, produces ATP from ADP in the presence of a proton gradient across the membrane. The V-type alpha chain is a catalytic subunit. This chain is V-type ATP synthase alpha chain, found in Thermoanaerobacter pseudethanolicus (strain ATCC 33223 / 39E) (Clostridium thermohydrosulfuricum).